A 588-amino-acid chain; its full sequence is Outer membrane transporter CdiB (588 aa).

A helical transmembrane segment spans residues 33 to 55 (VVRYFSLLPCLCILSFSSPAAML). The POTRA domain occupies 104-179 (FTVSRIVVSG…GVLHITVMEG (76 aa)).

It belongs to the TPS (TC 1.B.20) family.

It is found in the cell outer membrane. In terms of biological role, potential outer membrane protein component of a toxin-immunity protein module, which functions as a cellular contact-dependent growth inhibition (CDI) system. CDI modules allow bacteria to communicate with and inhibit the growth of closely related neighboring bacteria in a contact-dependent fashion. This protein may be required for secretion and assembly of the CdiA toxin protein. Its function is as follows. Probable member of a two partner secretion pathway (TPS) in which it mediates the secretion of CdiA. The chain is Outer membrane transporter CdiB from Escherichia coli O6:K15:H31 (strain 536 / UPEC).